Consider the following 419-residue polypeptide: Tubby-like protein 4 (419 aa).

The segment at 1–96 (MAATKREPLR…EREEEEEGSS (96 aa)) is disordered. The segment covering 33–57 (AKEKEKENEVPTEIGRGKDGGEKKP) has biased composition (basic and acidic residues).

The protein belongs to the TUB family.

This is Tubby-like protein 4 (TULP4) from Oryza sativa subsp. japonica (Rice).